The sequence spans 1740 residues: Vitamin B12-dependent ribonucleoside-diphosphate reductase (1740 aa).

The 93-residue stretch at 4 to 96 (EKVMKRDGRI…LYRKKKAEIR (93 aa)) folds into the ATP-cone domain. Substrate contacts are provided by residues Thr257, 272-273 (AC), and Gly301. Cys273 and Cys1308 form a disulfide bridge. The region spanning 443-582 (LAGFIAGDGC…VTHYLNALGI (140 aa)) is the DOD-type homing endonuclease 1 domain. Residue Asn913 is the Proton acceptor of the active site. Residue 913 to 914 (NP) participates in substrate binding. In terms of domain architecture, DOD-type homing endonuclease 2 spans 1063–1194 (VLGWFIGDGY…VQDLLLLFGI (132 aa)). Cys1297 acts as the Cysteine radical intermediate in catalysis. Residues 1297 to 1299 (CGE) and 1471 to 1475 (PTGSV) each bind substrate. Catalysis depends on Glu1299, which acts as the Proton acceptor.

The protein belongs to the ribonucleoside diphosphate reductase class-2 family. The cofactor is adenosylcob(III)alamin. In terms of processing, this protein undergoes a protein self splicing that involves a post-translational excision of the intervening region (intein) followed by peptide ligation.

The enzyme catalyses a 2'-deoxyribonucleoside 5'-diphosphate + [thioredoxin]-disulfide + H2O = a ribonucleoside 5'-diphosphate + [thioredoxin]-dithiol. Functionally, provides the precursors necessary for DNA synthesis. Catalyzes the biosynthesis of deoxyribonucleotides from the corresponding ribonucleotides. The polypeptide is Vitamin B12-dependent ribonucleoside-diphosphate reductase (rnr) (Pyrococcus furiosus (strain ATCC 43587 / DSM 3638 / JCM 8422 / Vc1)).